The chain runs to 462 residues: MELRLYNTLTRSKDTLRPLDPANVRMYVCGPTVYDHAHIGNARPVIVFDVLFRLLRRLYGEGHVKYVRNITDVDDKINARAAERGITIRDLTEETYRWFREDTAALNCLRPTVEPRATEHIAEMRTLIESLVASGHAYVAEEHVLFHVPSMPDYGRLSRRPLDEMVAGARVDVAPYKRDPMDFVLWKPSEAGIPGWPSPCGIATPGRPGWHIECSAMSWRHLGETFDIHGGGIDLVFPHHENEIAQSRCAFHTGVMAQMWMHNGFLMLEGEKMSKSLGNFVTIRELLAEWPGEVLRLAMLSTHYRQPINWTRQGLGFAAKTLDKWYRIIGEAEAETGEGNPFETEIADRLADDLNTPSVITHLHHLAEVAEHEEASSALRRRFKGAANLLGLLGDTETGWRARQKEAIALDEGVIAGLIADRLAARKAKDFKRADQIREELAAQGVVLMDNKDGTTSWEVSR.

C29 is a binding site for Zn(2+). The 'HIGH' region motif lies at 31–41; that stretch reads PTVYDHAHIGN. The Zn(2+) site is built by C214, H239, and E243. The 'KMSKS' region signature appears at 272 to 276; sequence KMSKS. K275 lines the ATP pocket.

The protein belongs to the class-I aminoacyl-tRNA synthetase family. In terms of assembly, monomer. Requires Zn(2+) as cofactor.

The protein resides in the cytoplasm. It carries out the reaction tRNA(Cys) + L-cysteine + ATP = L-cysteinyl-tRNA(Cys) + AMP + diphosphate. The chain is Cysteine--tRNA ligase from Xanthobacter autotrophicus (strain ATCC BAA-1158 / Py2).